The sequence spans 426 residues: Tetracenomycin polyketide synthase ketoacyl synthase alpha subunit (426 aa).

One can recognise a Ketosynthase family 3 (KS3) domain in the interval 6 to 420 (EKRVVITGIG…GFQSAAVLAR (415 aa)). Catalysis depends on for beta-ketoacyl synthase activity residues cysteine 173, histidine 313, and histidine 350.

The protein belongs to the thiolase-like superfamily. Beta-ketoacyl-ACP synthases family. As to quaternary structure, the tetracenomycin polyketide synthase (TCM PKS) is composed of a ketosynthase complex (TcmKL), an acyl carrier protein (TcmM), a cyclase (TcmN) and a probable second cyclase (TcmJ). TcmK and TcmL form a heterodimeric complex.

The catalysed reaction is 10 malonyl-CoA + 8 H(+) = tetracenomycin F2 + 10 CO2 + 10 CoA + 2 H2O. The protein operates within antibiotic biosynthesis; tetracenomycin C biosynthesis. Its function is as follows. Involved in the biosynthesis of tetracenomycin C (TCM C). Part of a type II polyketide synthase (PKS) that catalyzes the synthesis of tetracenomycin F2 (TCM F2), a precursor of TCM C, from malonyl-CoA. TcmK and TcmL form a heterodimeric alpha-beta complex that catalyzes the condensation reactions between the growing acyl-enzyme chain and the malonyl-CoA extender units. The sequence is that of Tetracenomycin polyketide synthase ketoacyl synthase alpha subunit from Streptomyces glaucescens.